We begin with the raw amino-acid sequence, 69 residues long: UPF0337 protein ECA0631 (69 aa).

Belongs to the UPF0337 (CsbD) family.

The protein is UPF0337 protein ECA0631 of Pectobacterium atrosepticum (strain SCRI 1043 / ATCC BAA-672) (Erwinia carotovora subsp. atroseptica).